Reading from the N-terminus, the 447-residue chain is N-succinylarginine dihydrolase (447 aa).

Substrate contacts are provided by residues Ala-19–Ser-28, Asn-110, and His-137–Arg-138. Residue Glu-174 is part of the active site. Arg-212 lines the substrate pocket. His-248 is an active-site residue. 2 residues coordinate substrate: Asp-250 and Asn-359. Cys-365 serves as the catalytic Nucleophile.

The protein belongs to the succinylarginine dihydrolase family. Homodimer.

The enzyme catalyses N(2)-succinyl-L-arginine + 2 H2O + 2 H(+) = N(2)-succinyl-L-ornithine + 2 NH4(+) + CO2. It participates in amino-acid degradation; L-arginine degradation via AST pathway; L-glutamate and succinate from L-arginine: step 2/5. Catalyzes the hydrolysis of N(2)-succinylarginine into N(2)-succinylornithine, ammonia and CO(2). This chain is N-succinylarginine dihydrolase, found in Escherichia fergusonii (strain ATCC 35469 / DSM 13698 / CCUG 18766 / IAM 14443 / JCM 21226 / LMG 7866 / NBRC 102419 / NCTC 12128 / CDC 0568-73).